Here is a 424-residue protein sequence, read N- to C-terminus: Probable methyltransferase EP424R (424 aa).

In terms of domain architecture, Adrift-type SAM-dependent 2'-O-MTase spans 103–315 (QIVTNAWLKM…TYIVGKNRLR (213 aa)). Gly135 and Asp228 together coordinate S-adenosyl-L-methionine. The active-site Proton acceptor is the Lys268.

The protein localises to the virion. The sequence is that of Probable methyltransferase EP424R from Ornithodoros (relapsing fever ticks).